Consider the following 229-residue polypeptide: Potassium/proton antiporter CemA (229 aa).

3 helical membrane-spanning segments follow: residues 7–27, 107–127, and 189–209; these read FTPL…SLLF, ILHF…SIFG, and IISG…KYWI.

It belongs to the CemA family.

Its subcellular location is the plastid. It is found in the chloroplast inner membrane. It catalyses the reaction K(+)(in) + H(+)(out) = K(+)(out) + H(+)(in). In terms of biological role, contributes to K(+)/H(+) antiport activity by supporting proton efflux to control proton extrusion and homeostasis in chloroplasts in a light-dependent manner to modulate photosynthesis. Prevents excessive induction of non-photochemical quenching (NPQ) under continuous-light conditions. Indirectly promotes efficient inorganic carbon uptake into chloroplasts. The protein is Potassium/proton antiporter CemA of Guizotia abyssinica (Niger).